We begin with the raw amino-acid sequence, 255 residues long: Small ribosomal subunit protein uS2 (255 aa).

Positions 226-255 (QGVSNEEVAAEQNIDLDEKEKSEETEATEE) are disordered.

The protein belongs to the universal ribosomal protein uS2 family.

This is Small ribosomal subunit protein uS2 from Staphylococcus aureus (strain Mu3 / ATCC 700698).